We begin with the raw amino-acid sequence, 395 residues long: ATP phosphoribosyltransferase regulatory subunit (395 aa).

It belongs to the class-II aminoacyl-tRNA synthetase family. HisZ subfamily. As to quaternary structure, heteromultimer composed of HisG and HisZ subunits.

The protein resides in the cytoplasm. The protein operates within amino-acid biosynthesis; L-histidine biosynthesis; L-histidine from 5-phospho-alpha-D-ribose 1-diphosphate: step 1/9. Functionally, required for the first step of histidine biosynthesis. May allow the feedback regulation of ATP phosphoribosyltransferase activity by histidine. The protein is ATP phosphoribosyltransferase regulatory subunit of Thioalkalivibrio sulfidiphilus (strain HL-EbGR7).